The sequence spans 162 residues: SsrA-binding protein (162 aa).

The protein belongs to the SmpB family.

The protein localises to the cytoplasm. Required for rescue of stalled ribosomes mediated by trans-translation. Binds to transfer-messenger RNA (tmRNA), required for stable association of tmRNA with ribosomes. tmRNA and SmpB together mimic tRNA shape, replacing the anticodon stem-loop with SmpB. tmRNA is encoded by the ssrA gene; the 2 termini fold to resemble tRNA(Ala) and it encodes a 'tag peptide', a short internal open reading frame. During trans-translation Ala-aminoacylated tmRNA acts like a tRNA, entering the A-site of stalled ribosomes, displacing the stalled mRNA. The ribosome then switches to translate the ORF on the tmRNA; the nascent peptide is terminated with the 'tag peptide' encoded by the tmRNA and targeted for degradation. The ribosome is freed to recommence translation, which seems to be the essential function of trans-translation. This Granulibacter bethesdensis (strain ATCC BAA-1260 / CGDNIH1) protein is SsrA-binding protein.